Consider the following 175-residue polypeptide: Ribosome maturation factor RimM (175 aa).

A PRC barrel domain is found at 96 to 175; that stretch reads EEDFYWRDLI…LIQVNWEPDF (80 aa).

This sequence belongs to the RimM family. Binds ribosomal protein uS19.

It localises to the cytoplasm. In terms of biological role, an accessory protein needed during the final step in the assembly of 30S ribosomal subunit, possibly for assembly of the head region. Essential for efficient processing of 16S rRNA. May be needed both before and after RbfA during the maturation of 16S rRNA. It has affinity for free ribosomal 30S subunits but not for 70S ribosomes. This Psychromonas ingrahamii (strain DSM 17664 / CCUG 51855 / 37) protein is Ribosome maturation factor RimM.